The sequence spans 803 residues: Volume-regulated anion channel subunit LRRC8C (803 aa).

The Cytoplasmic segment spans residues 1 to 22; that stretch reads MIPVTEFRQFSEQQPAFRVLKP. Residues 23 to 47 traverse the membrane as a helical segment; it reads WWDVFTDYLSVAMLMIGVFGCTLQV. Residues 48–124 are Extracellular-facing; that stretch reads MQDKIICLPK…CYERALHWYA (77 aa). 2 disulfides stabilise this stretch: C54–C308 and C115–C293. 2 N-linked (GlcNAc...) asparagine glycosylation sites follow: N64 and N70. A helical transmembrane segment spans residues 125–144; it reads KYFPYLVLIHTLVFMLCSNF. Residues 145–262 lie on the Cytoplasmic side of the membrane; the sequence is WFKFPGSSSK…EEGDILYAMY (118 aa). Positions 177 to 209 are disordered; sequence EVSGEDSEEKDNRKNNMNRSNTIQSGPEDSLVN. The span at 191 to 209 shows a compositional bias: polar residues; the sequence is NNMNRSNTIQSGPEDSLVN. Phosphoserine is present on residues S212 and S215. Residues 263-284 form a helical membrane-spanning segment; sequence VRQTVLKVIKFLIIIAYNSALV. Topologically, residues 285–314 are extracellular; the sequence is SKVQFTVDCNVDIQDMTGYKNFSCNHTMAH. A helical membrane pass occupies residues 315–339; sequence LFSKLSFCYLCFVSIYGLTCLYTLY. The Cytoplasmic segment spans residues 340–803; the sequence is WLFYRSLREY…SDVREQMKTE (464 aa). LRR repeat units follow at residues 397–420, 421–443, 446–466, 467–488, 490–513, 515–537, 541–563, 565–587, 588–611, 613–635, 636–659, 660–682, 684–705, 706–728, 730–751, 753–774, and 776–799; these read ENKLKQLNLNNEWTPDKLRQKLQT, NAHNRLELPLIMLSGLPDTVFEI, LQSLKLEIIKNVMIPATIAQL, DNLQELSLHQCSVKIHSAALSF, KENLKVLSVKFDDMRELPPWMYGL, NLEELYLVGSLSHDISRNVTLES, LKSLKILSIKSNVSKIPQAVVDV, SHLQKMCIHNDGTKLVMLNNLKK, MTNLTELELVHCDLERIPHAVFSL, SLQELDLKENNLKSIEEIVSFQH, LRKLTVLKLWHNSITYIPEHIKKL, TSLERLSFSHNKIEVLPSHLFLC, KIRYLDLSYNDIRFIPPEIGVL, QSLQYFSITCNKVESLPDELYFC, KLKTLKIGKNSLSVLSPKIGNL, FLSYLDVKGNHFEILPPELGDC, and ALKRAGLVVEDALFETLPSDVREQ.

Belongs to the LRRC8 family. In terms of assembly, heterohexamer; oligomerizes with other LRRC8 proteins (LRRC8A, LRRC8B, LRRC8D and/or LRRC8E) to form a heterohexamer. Homoheptamer; inactive, likely because it is not targeted to the plasma membrane in the absence of LRRC8A. In vivo, the subunit composition may depend primarily on expression levels, and heterooligomeric channels containing various proportions of the different LRRC8 proteins may coexist. In terms of tissue distribution, expressed at highest levels in skeletal muscle, and at moderate levels in heart, lung and peripheral blood leukocytes.

The protein localises to the cell membrane. It localises to the endoplasmic reticulum membrane. The enzyme catalyses chloride(in) = chloride(out). The catalysed reaction is iodide(out) = iodide(in). It catalyses the reaction taurine(out) = taurine(in). It carries out the reaction 2',3'-cGAMP(out) = 2',3'-cGAMP(in). In terms of biological role, non-essential component of the volume-regulated anion channel (VRAC, also named VSOAC channel), an anion channel required to maintain a constant cell volume in response to extracellular or intracellular osmotic changes. The VRAC channel conducts iodide better than chloride and can also conduct organic osmolytes like taurine. Plays a redundant role in the efflux of amino acids, such as aspartate and glutamate, in response to osmotic stress. The VRAC channel also mediates transport of immunoreactive cyclic dinucleotide GMP-AMP (2'-3'-cGAMP), an immune messenger produced in response to DNA virus in the cytosol. Channel activity requires LRRC8A plus at least one other family member (LRRC8B, LRRC8C, LRRC8D or LRRC8E); channel characteristics depend on the precise subunit composition. The protein is Volume-regulated anion channel subunit LRRC8C of Homo sapiens (Human).